The following is a 287-amino-acid chain: Large ribosomal subunit protein uL2 (287 aa).

The interval 203-287 (LSAGKAGRNR…SKRGRGGRES (85 aa)) is disordered. Basic residues-rich tracts occupy residues 209–220 (GRNRWKGRRPKV) and 258–287 (KTRK…GRES).

This sequence belongs to the universal ribosomal protein uL2 family. In terms of assembly, part of the 50S ribosomal subunit. Forms a bridge to the 30S subunit in the 70S ribosome.

In terms of biological role, one of the primary rRNA binding proteins. Required for association of the 30S and 50S subunits to form the 70S ribosome, for tRNA binding and peptide bond formation. It has been suggested to have peptidyltransferase activity; this is somewhat controversial. Makes several contacts with the 16S rRNA in the 70S ribosome. The chain is Large ribosomal subunit protein uL2 from Nostoc sp. (strain PCC 7120 / SAG 25.82 / UTEX 2576).